A 382-amino-acid chain; its full sequence is MIELDLCFGLLLLILFGLLSLRNGHVSLAHIRFICQCWLVMITPLEVQDFALCILTVVLLQSFHSFEALLFLLLAYIGQLYMMHSCNLVSFYVCLEAQTLCVVVLCGLLARGASTSFSVEAALKFLLLSAMVSGMALFWFSAMYQRTGSLDMVGQETFWILLVMLFKLGVAPMHMWSVDLYGSIPKSLLLYLSTAPKLSLFTFWASSWHHDFSVGVFILFSMFIGSIGAYGQPALRSLFAYSTINEIGLLLLAVETAGFHTLYQHLGIYIITQLLLWNLTDKRLFALCAVSLAGLPPFAGFFGKAWIFWHAMSVQAFSLLAAALFCTLLSLVYYLRVIRLFWTAPVHTAASFTGAPNQTTLTSACAVALAFAPVMLVKPFVI.

12 consecutive transmembrane segments (helical) span residues 1 to 21 (MIELDLCFGLLLLILFGLLSL), 33 to 53 (FICQCWLVMITPLEVQDFALC), 54 to 74 (ILTVVLLQSFHSFEALLFLLL), 88 to 108 (LVSFYVCLEAQTLCVVVLCGL), 123 to 143 (LKFLLLSAMVSGMALFWFSAM), 158 to 178 (FWILLVMLFKLGVAPMHMWSV), 188 to 208 (LLLYLSTAPKLSLFTFWASSW), 212 to 232 (FSVGVFILFSMFIGSIGAYGQ), 239 to 259 (FAYSTINEIGLLLLAVETAGF), 260 to 280 (HTLYQHLGIYIITQLLLWNLT), 284 to 304 (LFALCAVSLAGLPPFAGFFGK), and 305 to 325 (AWIFWHAMSVQAFSLLAAALF).

It belongs to the complex I subunit 2 family.

The protein resides in the mitochondrion inner membrane. The enzyme catalyses a ubiquinone + NADH + 5 H(+)(in) = a ubiquinol + NAD(+) + 4 H(+)(out). Functionally, core subunit of the mitochondrial membrane respiratory chain NADH dehydrogenase (Complex I) that is believed to belong to the minimal assembly required for catalysis. Complex I functions in the transfer of electrons from NADH to the respiratory chain. The immediate electron acceptor for the enzyme is believed to be ubiquinone. This is NADH-ubiquinone oxidoreductase chain 2 (ND2) from Chlamydomonas reinhardtii (Chlamydomonas smithii).